We begin with the raw amino-acid sequence, 369 residues long: Uroporphyrinogen decarboxylase (369 aa).

Substrate contacts are provided by residues 28-32 (RQAGR), Asp-78, Tyr-154, Ser-209, and His-339.

The protein belongs to the uroporphyrinogen decarboxylase family. In terms of assembly, homodimer.

Its subcellular location is the cytoplasm. It catalyses the reaction uroporphyrinogen III + 4 H(+) = coproporphyrinogen III + 4 CO2. It functions in the pathway porphyrin-containing compound metabolism; protoporphyrin-IX biosynthesis; coproporphyrinogen-III from 5-aminolevulinate: step 4/4. Functionally, catalyzes the decarboxylation of four acetate groups of uroporphyrinogen-III to yield coproporphyrinogen-III. This Polaromonas naphthalenivorans (strain CJ2) protein is Uroporphyrinogen decarboxylase.